A 447-amino-acid chain; its full sequence is Phosphoglucosamine mutase (447 aa).

Ser-101 functions as the Phosphoserine intermediate in the catalytic mechanism. Ser-101, Asp-242, Asp-244, and Asp-246 together coordinate Mg(2+). Ser-101 is modified (phosphoserine).

This sequence belongs to the phosphohexose mutase family. It depends on Mg(2+) as a cofactor. Activated by phosphorylation.

The catalysed reaction is alpha-D-glucosamine 1-phosphate = D-glucosamine 6-phosphate. Catalyzes the conversion of glucosamine-6-phosphate to glucosamine-1-phosphate. In Azorhizobium caulinodans (strain ATCC 43989 / DSM 5975 / JCM 20966 / LMG 6465 / NBRC 14845 / NCIMB 13405 / ORS 571), this protein is Phosphoglucosamine mutase.